The sequence spans 507 residues: Transcription factor NIGTH1 (507 aa).

2 disordered regions span residues 139 to 172 (ASAA…TALD) and 238 to 268 (SREA…RKAR). Basic and acidic residues predominate over residues 152–161 (PKEHSEHHPL). Positions 263 to 323 (PHRKARRCWS…HLQKYRLHTR (61 aa)) constitute an HTH myb-type domain. Residues 294–319 (PKQIRELMKVDGLTNDEVKSHLQKYR) constitute a DNA-binding region (H-T-H motif). The interval 402–507 (AVAPPPPLPP…TTTSAGAINY (106 aa)) is disordered. Low complexity predominate over residues 412–433 (QQQLAPPYSAKSSASARLGSPD). A compositionally biased stretch (gly residues) spans 437-446 (RGSGGGGGAA). A compositionally biased stretch (acidic residues) spans 456-476 (ESIEEEGEGEEREDDDDDDEM).

In terms of assembly, interacts with ACA5.

The protein resides in the nucleus. Probable transcription factor that may play a role in regulatory networks controlling development and metabolism. This chain is Transcription factor NIGTH1, found in Oryza sativa subsp. japonica (Rice).